Consider the following 375-residue polypeptide: Alcohol dehydrogenase 1 (375 aa).

The residue at position 2 (Ser-2) is an N-acetylserine. 7 residues coordinate Zn(2+): Cys-47, His-68, Cys-98, Cys-101, Cys-104, Cys-112, and Cys-175. Residues 200–205 (WSGRVG), Asp-224, and Lys-229 contribute to the NAD(+) site. N6-succinyllysine is present on Lys-234. 293–295 (VGV) lines the NAD(+) pocket. The residue at position 340 (Lys-340) is an N6-succinyllysine. NAD(+) is bound at residue Arg-370.

The protein belongs to the zinc-containing alcohol dehydrogenase family. Class-I subfamily. In terms of assembly, homodimer. Zn(2+) serves as cofactor.

It localises to the cytoplasm. It catalyses the reaction a primary alcohol + NAD(+) = an aldehyde + NADH + H(+). It carries out the reaction a secondary alcohol + NAD(+) = a ketone + NADH + H(+). The protein is Alcohol dehydrogenase 1 (ADH1) of Geomys knoxjonesi (Jones' pocket gopher).